The following is a 243-amino-acid chain: Small ribosomal subunit protein uS3 (243 aa).

The KH type-2 domain maps to 39-110 (IRGFIQKKYA…QVRINVVEIE (72 aa)). A disordered region spans residues 215-243 (DQPLPVGASPRRKGSRRPQQFEDRSNDGK). Residues 233-243 (QQFEDRSNDGK) are compositionally biased toward basic and acidic residues.

It belongs to the universal ribosomal protein uS3 family. As to quaternary structure, part of the 30S ribosomal subunit. Forms a tight complex with proteins S10 and S14.

In terms of biological role, binds the lower part of the 30S subunit head. Binds mRNA in the 70S ribosome, positioning it for translation. The protein is Small ribosomal subunit protein uS3 of Prochlorococcus marinus (strain MIT 9211).